Reading from the N-terminus, the 303-residue chain is 2-dehydropantoate 2-reductase (303 aa).

NADP(+)-binding positions include 7-12 (GCGALG), Asn98, and Ala122. Substrate is bound at residue Asn98. The Proton donor role is filled by Lys176. Substrate contacts are provided by Asn180, Asn184, Asn194, and Ser244. Glu256 is a binding site for NADP(+).

This sequence belongs to the ketopantoate reductase family. Monomer.

The protein resides in the cytoplasm. It catalyses the reaction (R)-pantoate + NADP(+) = 2-dehydropantoate + NADPH + H(+). Its pathway is cofactor biosynthesis; (R)-pantothenate biosynthesis; (R)-pantoate from 3-methyl-2-oxobutanoate: step 2/2. In terms of biological role, catalyzes the NADPH-dependent reduction of ketopantoate into pantoic acid. The chain is 2-dehydropantoate 2-reductase (panE) from Escherichia coli O157:H7.